Consider the following 375-residue polypeptide: Lipid-A-disaccharide synthase (375 aa).

It belongs to the LpxB family.

It carries out the reaction a lipid X + a UDP-2-N,3-O-bis[(3R)-3-hydroxyacyl]-alpha-D-glucosamine = a lipid A disaccharide + UDP + H(+). It functions in the pathway bacterial outer membrane biogenesis; LPS lipid A biosynthesis. Functionally, condensation of UDP-2,3-diacylglucosamine and 2,3-diacylglucosamine-1-phosphate to form lipid A disaccharide, a precursor of lipid A, a phosphorylated glycolipid that anchors the lipopolysaccharide to the outer membrane of the cell. The polypeptide is Lipid-A-disaccharide synthase (Pseudomonas putida (strain ATCC 47054 / DSM 6125 / CFBP 8728 / NCIMB 11950 / KT2440)).